The primary structure comprises 839 residues: Protein translocase subunit SecA (839 aa).

ATP is bound by residues Gln85, 103–107 (GEGKT), and Asp492. A disordered region spans residues 794–820 (EINYSGPDAGDTKKEPVRRKEKKIGRN). 4 residues coordinate Zn(2+): Cys823, Cys825, Cys834, and Cys835.

It belongs to the SecA family. As to quaternary structure, monomer and homodimer. Part of the essential Sec protein translocation apparatus which comprises SecA, SecYEG and auxiliary proteins SecDF. Other proteins may also be involved. Requires Zn(2+) as cofactor.

Its subcellular location is the cell membrane. The protein localises to the cytoplasm. The catalysed reaction is ATP + H2O + cellular proteinSide 1 = ADP + phosphate + cellular proteinSide 2.. Its function is as follows. Part of the Sec protein translocase complex. Interacts with the SecYEG preprotein conducting channel. Has a central role in coupling the hydrolysis of ATP to the transfer of proteins into and across the cell membrane, serving as an ATP-driven molecular motor driving the stepwise translocation of polypeptide chains across the membrane. The protein is Protein translocase subunit SecA of Clostridium acetobutylicum (strain ATCC 824 / DSM 792 / JCM 1419 / IAM 19013 / LMG 5710 / NBRC 13948 / NRRL B-527 / VKM B-1787 / 2291 / W).